We begin with the raw amino-acid sequence, 251 residues long: Arginine and glutamate-rich protein 1-A (251 aa).

Positions 1–48 (MGRSRSRSSSRSKHSKHSRKRSRSKSKSKKRSRSKEPKRNRRSRSRSG) are enriched in basic residues. The segment at 1–53 (MGRSRSRSSSRSKHSKHSRKRSRSKSKSKKRSRSKEPKRNRRSRSRSGSRRDR) is necessary and sufficient for RNA binding. 2 disordered regions span residues 1–92 (MGRS…ERQR) and 215–251 (RMKL…KATE). Basic and acidic residues-rich tracts occupy residues 49-63 (SRRD…RTDM), 71-92 (RNND…ERQR), and 215-231 (RMKL…EEQK). Residues 54–251 (GGSPPDRTDM…RLSFSLKATE (198 aa)) form a necessary and sufficient for transcriptional regulation region.

This sequence belongs to the ARGLU1 family.

It localises to the nucleus. It is found in the nucleus speckle. The protein localises to the chromosome. Its function is as follows. Dual function regulator of gene expression; regulator of transcription and modulator of alternative splicing. General coactivator of nuclear receptor-induced gene expression. This Danio rerio (Zebrafish) protein is Arginine and glutamate-rich protein 1-A (arglu1a).